A 541-amino-acid chain; its full sequence is Transcription termination factor MTERF4, chloroplastic (541 aa).

Residues 1–45 (MKIRFCNGFTKPGFLLVHFEPPSFFAVRSRSLSDSTYGNLCNHKK) constitute a chloroplast transit peptide. 2 disordered regions span residues 66 to 103 (SRSL…SLYS) and 503 to 541 (EVET…EEFA). Residues 85 to 99 (GRDRDRDKDKGRDSK) are compositionally biased toward basic and acidic residues. Positions 507–517 (DPSSFDMNTLM) are enriched in polar residues. The span at 521-541 (REEESDSEYEEEEDDDDEEFA) shows a compositional bias: acidic residues.

This sequence belongs to the mTERF family.

It is found in the plastid. Its subcellular location is the chloroplast. The protein resides in the mitochondrion. Its function is as follows. Transcription termination factor required for processing and steady-state levels of plastid transcripts. Required for splicing of the chloroplastic Clp protease (ClpP) group IIa intron. Required for maturation of 16S rRNA and 23S rRNA in the chloroplast. Essential for embryogenesis. Required for the maintenance of the correct levels of transcripts in the mitochondria and chloroplasts. The sequence is that of Transcription termination factor MTERF4, chloroplastic from Arabidopsis thaliana (Mouse-ear cress).